We begin with the raw amino-acid sequence, 329 residues long: Beta-tectorin (329 aa).

An N-terminal signal peptide occupies residues Met-1–Ala-17. Residues Pro-19–Met-287 enclose the ZP domain. N-linked (GlcNAc...) asparagine glycans are attached at residues Asn-80, Asn-104, Asn-116, and Asn-145. A disulfide bridge connects residues Cys-204 and Cys-264. The GPI-anchor amidated glycine moiety is linked to residue Gly-304. Residues Leu-305–Leu-329 constitute a propeptide, removed in mature form.

May form homomeric filament after self-association or heteromeric filament after association with alpha-tectorin. In terms of processing, the N-terminus is blocked. Post-translationally, N-glycosylated. The presence of a hydrophobic C-terminus preceded by a potential cleavage site strongly suggests that tectorins are synthesized as glycosylphosphatidylinositol-linked, membrane-bound precursors. Tectorins are targeted to the apical surface of the inner ear epithelia by the lipid and proteolytically released into the extracellular compartment. Exclusively expressed in the inner ear, where it is found in basilar papilla, clear cells, supporting cells, cuboidal cells and the lagena macula.

The protein localises to the cell membrane. It is found in the secreted. The protein resides in the extracellular space. It localises to the extracellular matrix. Functionally, one of the major non-collagenous components of the tectorial membrane. The tectorial membrane is an extracellular matrix of the inner ear that covers the neuroepithelium of the cochlea and contacts the stereocilia bundles of specialized sensory hair cells. Sound induces movement of these hair cells relative to the tectorial membrane, deflects the stereocilia and leads to fluctuations in hair-cell membrane potential, transducing sound into electrical signals. The polypeptide is Beta-tectorin (TECTB) (Gallus gallus (Chicken)).